A 376-amino-acid chain; its full sequence is Heat-inducible transcription repressor HrcA (376 aa).

Belongs to the HrcA family.

Functionally, negative regulator of class I heat shock genes (grpE-dnaK-dnaJ and groELS operons). Prevents heat-shock induction of these operons. The sequence is that of Heat-inducible transcription repressor HrcA from Nostoc punctiforme (strain ATCC 29133 / PCC 73102).